The chain runs to 231 residues: tRNA (guanine-N(1)-)-methyltransferase (231 aa).

S-adenosyl-L-methionine-binding positions include G112 and 132 to 137 (LGDFVL).

The protein belongs to the RNA methyltransferase TrmD family. Homodimer.

It is found in the cytoplasm. It catalyses the reaction guanosine(37) in tRNA + S-adenosyl-L-methionine = N(1)-methylguanosine(37) in tRNA + S-adenosyl-L-homocysteine + H(+). In terms of biological role, specifically methylates guanosine-37 in various tRNAs. This Microcystis aeruginosa (strain NIES-843 / IAM M-2473) protein is tRNA (guanine-N(1)-)-methyltransferase.